The chain runs to 136 residues: Mini-ribonuclease 3 (136 aa).

D20 is an active-site residue.

This sequence belongs to the MrnC RNase family. Homodimer. The cofactor is Mg(2+).

The protein resides in the cytoplasm. In terms of biological role, involved in correct processing of both the 5' and 3' ends of 23S rRNA precursor. Processes 30S rRNA precursor transcript even in absence of ribonuclease 3 (Rnc); Rnc processes 30S rRNA into smaller rRNA precursors. The sequence is that of Mini-ribonuclease 3 from Listeria monocytogenes serovar 1/2a (strain ATCC BAA-679 / EGD-e).